An 89-amino-acid chain; its full sequence is MDVRFRLCLFLVILVIVANANVIKEPEKRFHPNLWRPPRCDWPHGVCSYIRDRCAPDTPFPCGPIFACPLPTNKCCCRRPYLPPWAGRR.

Residues 1–20 (MDVRFRLCLFLVILVIVANA) form the signal peptide. A propeptide spanning residues 21 to 27 (NVIKEPE) is cleaved from the precursor.

It belongs to the Cnidaria small cysteine-rich protein (SCRiP) family. gamma subfamily. Post-translationally, contains 4 disulfide bonds.

The protein resides in the secreted. It localises to the nematocyst. Functionally, induces neurotoxic symptoms on zebrafish. Has also been claimed to be implied in calcification, but tests on homolog proteins suggest that proteins of this family have a neurotoxic function and not a calcification function. This Acropora millepora (Staghorn coral) protein is Small cysteine-rich protein 1.